A 321-amino-acid polypeptide reads, in one-letter code: Lipoyl synthase (321 aa).

7 residues coordinate [4Fe-4S] cluster: cysteine 68, cysteine 73, cysteine 79, cysteine 94, cysteine 98, cysteine 101, and serine 308. Residues 80–297 (FNHGTATFMI…KVIALELGFT (218 aa)) form the Radical SAM core domain.

Belongs to the radical SAM superfamily. Lipoyl synthase family. It depends on [4Fe-4S] cluster as a cofactor.

The protein localises to the cytoplasm. It carries out the reaction [[Fe-S] cluster scaffold protein carrying a second [4Fe-4S](2+) cluster] + N(6)-octanoyl-L-lysyl-[protein] + 2 oxidized [2Fe-2S]-[ferredoxin] + 2 S-adenosyl-L-methionine + 4 H(+) = [[Fe-S] cluster scaffold protein] + N(6)-[(R)-dihydrolipoyl]-L-lysyl-[protein] + 4 Fe(3+) + 2 hydrogen sulfide + 2 5'-deoxyadenosine + 2 L-methionine + 2 reduced [2Fe-2S]-[ferredoxin]. It functions in the pathway protein modification; protein lipoylation via endogenous pathway; protein N(6)-(lipoyl)lysine from octanoyl-[acyl-carrier-protein]: step 2/2. Catalyzes the radical-mediated insertion of two sulfur atoms into the C-6 and C-8 positions of the octanoyl moiety bound to the lipoyl domains of lipoate-dependent enzymes, thereby converting the octanoylated domains into lipoylated derivatives. This is Lipoyl synthase from Aliivibrio salmonicida (strain LFI1238) (Vibrio salmonicida (strain LFI1238)).